We begin with the raw amino-acid sequence, 333 residues long: Quinolinate synthase (333 aa).

Iminosuccinate contacts are provided by His41 and Ser58. Cys103 is a [4Fe-4S] cluster binding site. Residues 129-131 (YIN) and Ser146 contribute to the iminosuccinate site. [4Fe-4S] cluster is bound at residue Cys189. Iminosuccinate-binding positions include 215-217 (HPE) and Thr232. Cys282 lines the [4Fe-4S] cluster pocket.

Belongs to the quinolinate synthase family. Type 2 subfamily. It depends on [4Fe-4S] cluster as a cofactor.

It localises to the cytoplasm. It carries out the reaction iminosuccinate + dihydroxyacetone phosphate = quinolinate + phosphate + 2 H2O + H(+). The protein operates within cofactor biosynthesis; NAD(+) biosynthesis; quinolinate from iminoaspartate: step 1/1. Functionally, catalyzes the condensation of iminoaspartate with dihydroxyacetone phosphate to form quinolinate. The polypeptide is Quinolinate synthase (Prochlorococcus marinus (strain MIT 9313)).